The chain runs to 416 residues: Meiotically up-regulated protein PB1A10.08 (416 aa).

It is found in the cytoplasm. Its function is as follows. May have a role in meiosis and sporulation. This chain is Meiotically up-regulated protein PB1A10.08, found in Schizosaccharomyces pombe (strain 972 / ATCC 24843) (Fission yeast).